The following is a 310-amino-acid chain: Membrane protein insertase YidC 2 (310 aa).

The N-terminal stretch at 1–23 (MKKIYKRLLFSGLALSMLFFLSG) is a signal peptide. A lipid anchor (N-palmitoyl cysteine) is attached at Cys24. A lipid anchor (S-diacylglycerol cysteine) is attached at Cys24. 5 consecutive transmembrane segments (helical) span residues 34 to 54 (GEGW…QYLA), 57 to 77 (LGLG…LLIL), 136 to 156 (FGGL…ALYI), 180 to 200 (IITV…TLSV), and 220 to 240 (VMIS…SGIF). Positions 263–310 (EFKKNPPKPFKSNARKDITPQANNDKKLITSKKQKSNRNAGKQRHHKQ) are disordered. Residues 276-290 (ARKDITPQANNDKKL) show a composition bias toward basic and acidic residues. Residues 291–310 (ITSKKQKSNRNAGKQRHHKQ) show a composition bias toward basic residues.

Belongs to the OXA1/ALB3/YidC family. Type 2 subfamily.

The protein resides in the cell membrane. Functionally, required for the insertion and/or proper folding and/or complex formation of integral membrane proteins into the membrane. Involved in integration of membrane proteins that insert both dependently and independently of the Sec translocase complex, as well as at least some lipoproteins. Partially complements an E.coli yidC depletion experiment. This is Membrane protein insertase YidC 2 (yidC2) from Streptococcus mutans serotype c (strain ATCC 700610 / UA159).